The chain runs to 229 residues: Non-structural protein P8 (229 aa).

2 consecutive transmembrane segments (helical) span residues 119 to 139 and 162 to 182; these read IIHM…VCTL and SLNP…MVCA.

This sequence belongs to the orbivirus NS3 family. As to quaternary structure, forms homooligomers via coiled-coil motif. Interacts with host OPTN; this interaction inhibits innate immune response.

Its subcellular location is the host cell membrane. It localises to the host Golgi apparatus. Its function is as follows. Plays a role in the inhibition of host innate immune response. Interacts with host OPTN and thus inhibits the recruitment of TBK1 to the host Golgi apparatus. In turn, downstream partner IRF3 cannot be activated and IFN-beta production is impaired. Facilitates viral particle release either by increasing plasma membrane permeability through a viroporin-like activity or by viral budding. In Antilocapra americana (Pronghorn), this protein is Non-structural protein P8 (Segment-10).